The primary structure comprises 247 residues: Sulfate transporter CysZ (247 aa).

Helical transmembrane passes span 29–49 (FVVLPLLANIILVGGAIFYLF), 66–86 (FLSWLTYILWPLLALTILATF), 141–160 (LLYILPKAIGLFLLLLIPAL), 164–186 (VGPVLWFIFTAWMLAIQYCDYPF), and 212–232 (VLVSVFTTIPILNLIVMPVAI).

The protein belongs to the CysZ family.

The protein resides in the cell inner membrane. Its function is as follows. High affinity, high specificity proton-dependent sulfate transporter, which mediates sulfate uptake. Provides the sulfur source for the cysteine synthesis pathway. The protein is Sulfate transporter CysZ of Vibrio parahaemolyticus serotype O3:K6 (strain RIMD 2210633).